The primary structure comprises 214 residues: Pyridoxine/pyridoxamine 5'-phosphate oxidase (214 aa).

Residues 9–12 (RKNY) and Lys-67 each bind substrate. FMN-binding positions include 62 to 67 (RIVLLK), 77 to 78 (YT), Lys-83, Lys-84, and Gln-106. Substrate-binding residues include Tyr-124, Arg-128, and Ser-132. Residues 141–142 (QS) and Trp-186 each bind FMN. Residue 192-194 (RLH) participates in substrate binding. Arg-196 is a binding site for FMN.

It belongs to the pyridoxamine 5'-phosphate oxidase family. Homodimer. FMN is required as a cofactor.

It catalyses the reaction pyridoxamine 5'-phosphate + O2 + H2O = pyridoxal 5'-phosphate + H2O2 + NH4(+). The catalysed reaction is pyridoxine 5'-phosphate + O2 = pyridoxal 5'-phosphate + H2O2. Its pathway is cofactor metabolism; pyridoxal 5'-phosphate salvage; pyridoxal 5'-phosphate from pyridoxamine 5'-phosphate: step 1/1. It participates in cofactor metabolism; pyridoxal 5'-phosphate salvage; pyridoxal 5'-phosphate from pyridoxine 5'-phosphate: step 1/1. Its function is as follows. Catalyzes the oxidation of either pyridoxine 5'-phosphate (PNP) or pyridoxamine 5'-phosphate (PMP) into pyridoxal 5'-phosphate (PLP). The polypeptide is Pyridoxine/pyridoxamine 5'-phosphate oxidase (Leptospira borgpetersenii serovar Hardjo-bovis (strain JB197)).